The sequence spans 199 residues: MDIELVAQTRTKSGKGPARALRRNEMVPAVLYGPKAETVSLSVPRQRLERLLRDMGEESKLLRLTVEGDGTAEMKQVLIREVQVHPVRRRFLHVDFYEVPLDHPIVVEVPVELLGEPVGVKKGGTLNLIQRMLSVRCLPGEIPEKVQVDVSKLDIGSSIQVEQLRTIVPFELTDDGGMAVVNVVAPEGAGKEDAEAAEE.

It belongs to the bacterial ribosomal protein bL25 family. CTC subfamily. In terms of assembly, part of the 50S ribosomal subunit; part of the 5S rRNA/L5/L18/L25 subcomplex. Contacts the 5S rRNA. Binds to the 5S rRNA independently of L5 and L18.

In terms of biological role, this is one of the proteins that binds to the 5S RNA in the ribosome where it forms part of the central protuberance. The polypeptide is Large ribosomal subunit protein bL25 (Syntrophobacter fumaroxidans (strain DSM 10017 / MPOB)).